The sequence spans 289 residues: Nucleotide-binding protein FRAAL4592 (289 aa).

13 to 20 (GLSGAGRS) is an ATP binding site. A GTP-binding site is contributed by 64–67 (DVRG).

This sequence belongs to the RapZ-like family.

Displays ATPase and GTPase activities. This Frankia alni (strain DSM 45986 / CECT 9034 / ACN14a) protein is Nucleotide-binding protein FRAAL4592.